A 108-amino-acid polypeptide reads, in one-letter code: Putative membrane protein insertion efficiency factor (108 aa).

This sequence belongs to the UPF0161 family.

Its subcellular location is the cell inner membrane. Could be involved in insertion of integral membrane proteins into the membrane. The protein is Putative membrane protein insertion efficiency factor of Chelativorans sp. (strain BNC1).